Consider the following 118-residue polypeptide: Galanin peptides (118 aa).

An N-terminal signal peptide occupies residues 1 to 19; sequence MHRCVGGVCVSLIVCAFLT. Residues 20-30 constitute a propeptide that is removed on maturation; that stretch reads ETLGMVIAAKE. Ala-61 is modified (alanine amide).

Belongs to the galanin family. In terms of tissue distribution, strongly expressed in brain and stomach, moderately in the eye, and very weakly in heart, kidney and gills. Not detected in liver.

The protein resides in the secreted. Its function is as follows. Endocrine hormone of the central and peripheral nervous systems that binds and activates the G protein-coupled receptors GALR1 (galr1a and galr1b) and GALR2 (galr2a and galr2b). This small neuropeptide may regulate diverse physiologic functions including contraction of smooth muscle of the gastrointestinal and genitourinary tract, growth hormone and insulin release and adrenal secretion. This chain is Galanin peptides, found in Danio rerio (Zebrafish).